The primary structure comprises 441 residues: Trigger factor (441 aa).

One can recognise a PPIase FKBP-type domain in the interval 163-248; sequence GDQVVFDFVG…IKEVKKPVPA (86 aa).

Belongs to the FKBP-type PPIase family. Tig subfamily.

The protein localises to the cytoplasm. The catalysed reaction is [protein]-peptidylproline (omega=180) = [protein]-peptidylproline (omega=0). Functionally, involved in protein export. Acts as a chaperone by maintaining the newly synthesized protein in an open conformation. Functions as a peptidyl-prolyl cis-trans isomerase. This chain is Trigger factor, found in Jannaschia sp. (strain CCS1).